Consider the following 441-residue polypeptide: Mitochondrial distribution and morphology protein 12 (441 aa).

Positions 1 to 441 (MSIDIDWERA…VYPSFWTFLV (441 aa)) constitute an SMP-LTD domain. Disordered regions lie at residues 68-89 (DFYE…PMRE) and 183-289 (RAVT…RMRE). Composition is skewed to polar residues over residues 226–245 (SRPS…SVST) and 253–263 (PSQTLLANNPG).

It belongs to the MDM12 family. Component of the ER-mitochondria encounter structure (ERMES) or MDM complex, composed of MMM1, MDM10, MDM12 and MDM34. An MMM1 homodimer associates with one molecule of MDM12 on each side in a pairwise head-to-tail manner, and the SMP-LTD domains of MMM1 and MDM12 generate a continuous hydrophobic tunnel for phospholipid trafficking.

The protein localises to the mitochondrion outer membrane. It is found in the endoplasmic reticulum membrane. Its function is as follows. Component of the ERMES/MDM complex, which serves as a molecular tether to connect the endoplasmic reticulum (ER) and mitochondria. Components of this complex are involved in the control of mitochondrial shape and protein biogenesis, and function in nonvesicular lipid trafficking between the ER and mitochondria. MDM12 is required for the interaction of the ER-resident membrane protein MMM1 and the outer mitochondrial membrane-resident beta-barrel protein MDM10. The MDM12-MMM1 subcomplex functions in the major beta-barrel assembly pathway that is responsible for biogenesis of all mitochondrial outer membrane beta-barrel proteins, and acts in a late step after the SAM complex. The MDM10-MDM12-MMM1 subcomplex further acts in the TOM40-specific pathway after the action of the MDM12-MMM1 complex. Essential for establishing and maintaining the structure of mitochondria and maintenance of mtDNA nucleoids. In Paracoccidioides lutzii (strain ATCC MYA-826 / Pb01) (Paracoccidioides brasiliensis), this protein is Mitochondrial distribution and morphology protein 12.